The chain runs to 402 residues: Arginine biosynthesis bifunctional protein ArgJ (402 aa).

Residues Thr149, Lys175, Thr186, Glu266, Asn397, and Thr402 each coordinate substrate. Thr186 acts as the Nucleophile in catalysis.

The protein belongs to the ArgJ family. In terms of assembly, heterotetramer of two alpha and two beta chains.

The protein localises to the cytoplasm. It carries out the reaction N(2)-acetyl-L-ornithine + L-glutamate = N-acetyl-L-glutamate + L-ornithine. The catalysed reaction is L-glutamate + acetyl-CoA = N-acetyl-L-glutamate + CoA + H(+). The protein operates within amino-acid biosynthesis; L-arginine biosynthesis; L-ornithine and N-acetyl-L-glutamate from L-glutamate and N(2)-acetyl-L-ornithine (cyclic): step 1/1. Its pathway is amino-acid biosynthesis; L-arginine biosynthesis; N(2)-acetyl-L-ornithine from L-glutamate: step 1/4. Catalyzes two activities which are involved in the cyclic version of arginine biosynthesis: the synthesis of N-acetylglutamate from glutamate and acetyl-CoA as the acetyl donor, and of ornithine by transacetylation between N(2)-acetylornithine and glutamate. The protein is Arginine biosynthesis bifunctional protein ArgJ of Prochlorococcus marinus subsp. pastoris (strain CCMP1986 / NIES-2087 / MED4).